The sequence spans 430 residues: Enolase (430 aa).

Gln167 contributes to the (2R)-2-phosphoglycerate binding site. Glu209 acts as the Proton donor in catalysis. Mg(2+)-binding residues include Asp246, Glu287, and Asp314. Positions 339, 368, 369, and 390 each coordinate (2R)-2-phosphoglycerate. Lys339 (proton acceptor) is an active-site residue.

The protein belongs to the enolase family. Mg(2+) is required as a cofactor.

It is found in the cytoplasm. It localises to the secreted. The protein resides in the cell surface. It carries out the reaction (2R)-2-phosphoglycerate = phosphoenolpyruvate + H2O. It participates in carbohydrate degradation; glycolysis; pyruvate from D-glyceraldehyde 3-phosphate: step 4/5. Catalyzes the reversible conversion of 2-phosphoglycerate (2-PG) into phosphoenolpyruvate (PEP). It is essential for the degradation of carbohydrates via glycolysis. This chain is Enolase, found in Prochlorococcus marinus (strain AS9601).